Consider the following 739-residue polypeptide: Potassium transporter 26 (739 aa).

Over 1–81 (MEYHHRPHSP…RQVALLSFQS (81 aa)) the chain is Cytoplasmic. The helical transmembrane segment at 82 to 102 (LGVVYGDLGTSPLYVFSSISL) threads the bilayer. Residues 103-112 (DDPGEADFVG) lie on the Extracellular side of the membrane. Residues 113–133 (ILSIILWTFTMICLVKYVFIV) traverse the membrane as a helical segment. Residues 134-198 (LKADDHGEGG…KFLEQSTKWQ (65 aa)) are Cytoplasmic-facing. Residues 199 to 219 (AVITYIVLAGTCMVLGDGALT) form a helical membrane-spanning segment. Residues 220–236 (PAISVLSAVQGIQSRSS) lie on the Extracellular side of the membrane. A helical transmembrane segment spans residues 237 to 257 (SITQAHVVLLSVIILFILFFF). Residues 258–268 (QKHGTSKVSFT) lie on the Cytoplasmic side of the membrane. The chain crosses the membrane as a helical span at residues 269–289 (FSPIMILWFTFVAFIGLYNII). Topologically, residues 290–318 (KHYPPILKAVSPHYIIIYFIRNKRAAWET) are extracellular. Residues 319–339 (LGAIVLCITGAEAMFADLGHF) traverse the membrane as a helical segment. The Cytoplasmic portion of the chain corresponds to 340-347 (NKSSIQMA). The chain crosses the membrane as a helical span at residues 348-368 (FSVIVYPSMILAYAGQAAFLV). The Extracellular portion of the chain corresponds to 369–385 (KNPSKLSTTFYSSTPEP). A helical transmembrane segment spans residues 386–406 (LFWPMFIIATLAAIVASQALI). Residues 407 to 437 (SASFSIIRQSIALGCFPRVTMKHTSGKHEGQ) lie on the Cytoplasmic side of the membrane. The chain crosses the membrane as a helical span at residues 438–458 (VYSPEINYFLMVACILITVGF). The Extracellular portion of the chain corresponds to 459 to 469 (KGGPEIGQAFG). The helical transmembrane segment at 470–490 (VAVIFVMLFTTNLMTVVMLII) threads the bilayer. Residues 491–494 (WESN) lie on the Cytoplasmic side of the membrane. The helical transmembrane segment at 495–515 (IALASLFFVFFFSIEGIYMTS) threads the bilayer. Residues 516-519 (LMNK) are Extracellular-facing. Residues 520–540 (ILQGGWVPFAITAFFLIITLS) traverse the membrane as a helical segment. Over 541–739 (WTYGRSKKGE…TLQVGMLYEI (199 aa)) the chain is Cytoplasmic.

The protein belongs to the HAK/KUP transporter (TC 2.A.72.3) family.

It localises to the membrane. Functionally, high-affinity potassium transporter. The chain is Potassium transporter 26 (HAK26) from Oryza sativa subsp. japonica (Rice).